Consider the following 536-residue polypeptide: Major facilitator superfamily domain-containing protein 4B (536 aa).

The next 12 membrane-spanning stretches (helical) occupy residues 19-39 (LTYW…GPTI), 53-73 (ITWV…SGGA), 81-101 (ALLA…IIPL), 105-125 (VLLL…IDTI), 140-160 (IFLQ…PLIA), 211-231 (YAFW…FVLM), 297-317 (FFLI…IMGV), 341-361 (LNCI…PLSY), 366-386 (VHLL…LMIL), 391-411 (VFLF…FPCL), 428-448 (VLVT…GTLI), and 456-476 (FLVC…SVIL).

The protein belongs to the major facilitator superfamily.

Its subcellular location is the membrane. This is Major facilitator superfamily domain-containing protein 4B from Danio rerio (Zebrafish).